The primary structure comprises 285 residues: RNA polymerase sigma factor RpoH (285 aa).

The segment at 53 to 122 is sigma-70 factor domain-2; that stretch reads LILSHLRFVA…IHEYVLRNWR (70 aa). An Interaction with polymerase core subunit RpoC motif is present at residues 77 to 80; it reads DLIQ. A sigma-70 factor domain-4 region spans residues 229–281; sequence ALEGLDERSQHIIRARWLDDDNKSTLQELADQYGVSAERVRQLEKNAMKKLKM. Positions 254–273 form a DNA-binding region, H-T-H motif; the sequence is LQELADQYGVSAERVRQLEK.

This sequence belongs to the sigma-70 factor family. RpoH subfamily. As to quaternary structure, interacts with the RNA polymerase core enzyme.

It localises to the cytoplasm. Sigma factors are initiation factors that promote the attachment of RNA polymerase to specific initiation sites and are then released. This sigma factor is involved in regulation of expression of heat shock genes. The protein is RNA polymerase sigma factor RpoH of Serratia marcescens.